The sequence spans 662 residues: Serine/threonine-protein kinase PTK1/STK1 (662 aa).

The segment at 35–119 is disordered; the sequence is GNKLKKKASL…SSTSRNLSNS (85 aa). A compositionally biased stretch (low complexity) spans 50–60; sequence STSTNDSESSS. 2 stretches are compositionally biased toward polar residues: residues 61–91 and 98–119; these read PKLP…SAST and GSST…LSNS. A Protein kinase domain is found at 196–503; it reads DDENKTIGWG…IDDLFEDPWF (308 aa). Residues 202 to 210 and Lys-226 contribute to the ATP site; that span reads IGWGGSCEV. Residue Asp-329 is the Proton acceptor of the active site. The segment at 605–631 is disordered; that stretch reads TLTLSEEPPATPAPSAPSAPSARVRGH.

It belongs to the protein kinase superfamily. Ser/Thr protein kinase family.

The catalysed reaction is L-seryl-[protein] + ATP = O-phospho-L-seryl-[protein] + ADP + H(+). It catalyses the reaction L-threonyl-[protein] + ATP = O-phospho-L-threonyl-[protein] + ADP + H(+). Functionally, essential determinant for low-affinity spermidine transport. In Saccharomyces cerevisiae (strain ATCC 204508 / S288c) (Baker's yeast), this protein is Serine/threonine-protein kinase PTK1/STK1 (PTK1).